A 439-amino-acid polypeptide reads, in one-letter code: C4-dicarboxylate transport protein (439 aa).

9 helical membrane-spanning segments follow: residues 9–29 (SLYAQVIVAIIIGVLLGHFLP), 45–65 (LIKMIIAPVIFCTVVIGIAGM), 77–97 (LALLYFEVMSTVALLVGLIIV), 145–165 (AFAKGDVLQVLLVSVLFGFAL), 185–205 (VLFTIVGFIMRAAPVGAFGAM), 223–243 (LMGAFYLTCLFFIFVVLGIVT), 290–310 (VVGLVIPTGYSFNLDGTAIYL), 332–352 (TLLAVLLLTSKGAAGITGSGF), and 353–373 (IVLAATLSAVGHVPVAGLALI). The segment at 417–439 (NESPQAADQPEKILDQTNTKLGA) is disordered.

Belongs to the dicarboxylate/amino acid:cation symporter (DAACS) (TC 2.A.23) family.

It is found in the cell inner membrane. Its function is as follows. Responsible for the transport of dicarboxylates such as succinate, fumarate, and malate from the periplasm across the membrane. This Janthinobacterium sp. (strain Marseille) (Minibacterium massiliensis) protein is C4-dicarboxylate transport protein.